The chain runs to 598 residues: Urease subunit alpha (598 aa).

H141, H143, and K223 together coordinate Ni(2+). K223 carries the N6-carboxylysine modification. H225 is a substrate binding site. The Ni(2+) site is built by H252 and H278. H326 functions as the Proton donor in the catalytic mechanism. Residue D366 participates in Ni(2+) binding.

This sequence belongs to the metallo-dependent hydrolases superfamily. Urease alpha subunit family. In terms of assembly, heterotrimer of UreA (gamma), UreB (beta) and UreC (alpha) subunits. Three heterotrimers associate to form the active enzyme. Ni cation serves as cofactor. Carboxylation allows a single lysine to coordinate two nickel ions.

It localises to the cytoplasm. The enzyme catalyses urea + 2 H2O + H(+) = hydrogencarbonate + 2 NH4(+). It functions in the pathway nitrogen metabolism; urea degradation; CO(2) and NH(3) from urea (urease route): step 1/1. This is Urease subunit alpha from Ureaplasma parvum serovar 3 (strain ATCC 27815 / 27 / NCTC 11736).